The primary structure comprises 454 residues: 3-phosphoshikimate 1-carboxyvinyltransferase (454 aa).

Residues 1-31 (MSENHSEGASRPVISRRPAAGLRADHPVHVP) form a disordered region. 3-phosphoshikimate is bound by residues Lys-34, Ser-35, and Arg-39. Lys-34 serves as a coordination point for phosphoenolpyruvate. Phosphoenolpyruvate contacts are provided by Gly-107 and Arg-135. 3-phosphoshikimate is bound by residues Ser-180, Gln-182, Asp-334, and Lys-361. Gln-182 provides a ligand contact to phosphoenolpyruvate. Residue Asp-334 is the Proton acceptor of the active site. 2 residues coordinate phosphoenolpyruvate: Arg-365 and Arg-409.

The protein belongs to the EPSP synthase family. In terms of assembly, monomer.

It localises to the cytoplasm. The catalysed reaction is 3-phosphoshikimate + phosphoenolpyruvate = 5-O-(1-carboxyvinyl)-3-phosphoshikimate + phosphate. It participates in metabolic intermediate biosynthesis; chorismate biosynthesis; chorismate from D-erythrose 4-phosphate and phosphoenolpyruvate: step 6/7. Its function is as follows. Catalyzes the transfer of the enolpyruvyl moiety of phosphoenolpyruvate (PEP) to the 5-hydroxyl of shikimate-3-phosphate (S3P) to produce enolpyruvyl shikimate-3-phosphate and inorganic phosphate. This is 3-phosphoshikimate 1-carboxyvinyltransferase from Granulibacter bethesdensis (strain ATCC BAA-1260 / CGDNIH1).